The following is a 355-amino-acid chain: DnaJ homolog dnj-20 (355 aa).

The first 21 residues, 1–21 (MRILNVSLLVLASSLVAFVEC), serve as a signal peptide directing secretion. The 66-residue stretch at 24-89 (DFYKILGVAK…EKRAMYDRHG (66 aa)) folds into the J domain.

This is DnaJ homolog dnj-20 from Caenorhabditis elegans.